A 416-amino-acid chain; its full sequence is Probable F-box protein At5g47300 (416 aa).

An F-box domain is found at 40–86 (TLMLSDLPGDLLEEILCRVPATSLKQLRSTCKQWNNLFNNGRFTRKH).

This is Probable F-box protein At5g47300 from Arabidopsis thaliana (Mouse-ear cress).